The sequence spans 76 residues: Small ribosomal subunit protein bS18 (76 aa).

Belongs to the bacterial ribosomal protein bS18 family. Part of the 30S ribosomal subunit. Forms a tight heterodimer with protein bS6.

Binds as a heterodimer with protein bS6 to the central domain of the 16S rRNA, where it helps stabilize the platform of the 30S subunit. In Stutzerimonas stutzeri (strain A1501) (Pseudomonas stutzeri), this protein is Small ribosomal subunit protein bS18.